The sequence spans 85 residues: U4-theraphotoxin-Hhn1l (85 aa).

The N-terminal stretch at 1 to 22 (MKVTLIAFLTCAAVLVLHTTAA) is a signal peptide. A propeptide spanning residues 23-48 (EELEAESQLMGVGMPDTELAAVDEER) is cleaved from the precursor. Intrachain disulfides connect cysteine 52-cysteine 66, cysteine 56-cysteine 77, and cysteine 71-cysteine 82.

This sequence belongs to the neurotoxin 12 (Hwtx-2) family. 02 (Hwtx-2) subfamily. In terms of tissue distribution, expressed by the venom gland.

It is found in the secreted. In terms of biological role, postsynaptic neurotoxin. The protein is U4-theraphotoxin-Hhn1l of Cyriopagopus hainanus (Chinese bird spider).